Reading from the N-terminus, the 174-residue chain is Peptide deformylase (174 aa).

Residues Cys-96 and His-138 each contribute to the Fe cation site. Glu-139 is a catalytic residue. His-142 provides a ligand contact to Fe cation.

Belongs to the polypeptide deformylase family. Fe(2+) serves as cofactor.

The enzyme catalyses N-terminal N-formyl-L-methionyl-[peptide] + H2O = N-terminal L-methionyl-[peptide] + formate. Functionally, removes the formyl group from the N-terminal Met of newly synthesized proteins. Requires at least a dipeptide for an efficient rate of reaction. N-terminal L-methionine is a prerequisite for activity but the enzyme has broad specificity at other positions. In Helicobacter pylori (strain HPAG1), this protein is Peptide deformylase.